We begin with the raw amino-acid sequence, 37 residues long: Large ribosomal subunit protein bL36 (37 aa).

Belongs to the bacterial ribosomal protein bL36 family.

The chain is Large ribosomal subunit protein bL36 from Nitratidesulfovibrio vulgaris (strain ATCC 29579 / DSM 644 / CCUG 34227 / NCIMB 8303 / VKM B-1760 / Hildenborough) (Desulfovibrio vulgaris).